The chain runs to 144 residues: Large ribosomal subunit protein uL15 (144 aa).

Residues 1–57 are disordered; that stretch reads MELNNLKPAEGAKHAKRRVGRGIGSGLGKTAGRGHKGQKSRSGGFHKVGFEGGQMPL. Residues 21–31 are compositionally biased toward gly residues; that stretch reads RGIGSGLGKTA.

Belongs to the universal ribosomal protein uL15 family. As to quaternary structure, part of the 50S ribosomal subunit.

In terms of biological role, binds to the 23S rRNA. This is Large ribosomal subunit protein uL15 from Paraburkholderia xenovorans (strain LB400).